A 328-amino-acid chain; its full sequence is Methionyl-tRNA formyltransferase (328 aa).

110-113 (SLLP) is a binding site for (6S)-5,6,7,8-tetrahydrofolate.

Belongs to the Fmt family.

It catalyses the reaction L-methionyl-tRNA(fMet) + (6R)-10-formyltetrahydrofolate = N-formyl-L-methionyl-tRNA(fMet) + (6S)-5,6,7,8-tetrahydrofolate + H(+). Its function is as follows. Attaches a formyl group to the free amino group of methionyl-tRNA(fMet). The formyl group appears to play a dual role in the initiator identity of N-formylmethionyl-tRNA by promoting its recognition by IF2 and preventing the misappropriation of this tRNA by the elongation apparatus. This is Methionyl-tRNA formyltransferase from Prochlorococcus marinus (strain MIT 9312).